The following is a 100-amino-acid chain: Replication restart protein PriB (100 aa).

An SSB domain is found at 1-99 (MGFNNLVSLA…LRIQNIQEYK (99 aa)).

The protein belongs to the PriB family. Homodimer. Interacts with PriA and DnaT. Component of the replication restart primosome. Primosome assembly occurs via a 'hand-off' mechanism. PriA binds to replication forks, subsequently PriB then DnaT bind; DnaT then displaces ssDNA to generate the helicase loading substrate.

In terms of biological role, involved in the restart of stalled replication forks, which reloads the replicative helicase on sites other than the origin of replication; the PriA-PriB pathway is the major replication restart pathway. During primosome assembly it facilitates complex formation between PriA and DnaT on DNA; stabilizes PriA on DNA. Stimulates the DNA unwinding activity of PriA helicase. The sequence is that of Replication restart protein PriB from Neisseria meningitidis serogroup B (strain ATCC BAA-335 / MC58).